Reading from the N-terminus, the 470-residue chain is MNVSRLALAVVEPHIEVLNPFDGSIVGTVADVCASEVPHLLETGRSGARACAALPRHRRASILEQAALNIERDAKAFARLIVDEAGKTLKQAEKEVKRCVNTLKLSAEEAKRNAGEIVPFDAYEGAESRQGWFTREPLGLIVAITPYNDPLNLVAHKLGPAIAGGNAVILKPSELAPLSALKLVSYLVAAGLPETVVTVATGGAELGKALVAARDVRMISFTGGFVTGEQIARTAGLKKLAMDLGGNAPVIVMGDCNLDAAVDSCVSGAFWAAGQNCIGTQRLLIHAPIYEAFRERFVNQAQALVVGNPLLANTDIGPMITQQAAQNAEQMVNEALQQGATLLCGHRRQGNCYGATVLENVDHSSRIWRNEAFAPVVVLQVFETFDEAIALANEPEYALHAGIFTNDLSTAMSAARRIEAGGVMINDSSDFRFDAMPFGGSKYGSLGREGVRFAYEEMTQPKVVCLNVLG.

NAD(+) contacts are provided by threonine 145 and lysine 171. Aspartate 243 is a catalytic residue. Residue glycine 245 coordinates NAD(+). Residue cysteine 277 is part of the active site. Glutamate 371 is a binding site for NAD(+).

The protein belongs to the aldehyde dehydrogenase family.

The enzyme catalyses L-aspartate 4-semialdehyde + NAD(+) + H2O = L-aspartate + NADH + 2 H(+). In terms of biological role, dehydrogenase involved in the degradation of canavanine, the delta-oxa-analog of arginine, allowing growth on canavanine as sole nitrogen and carbon source. Probably catalyzes the NAD(+)-dependent oxidation of L-aspartate-semialdehyde to L-aspartate. In Pseudomonas canavaninivorans, this protein is Aspartate-semialdehyde dehydrogenase 1.